Reading from the N-terminus, the 201-residue chain is Ras-related protein Rab-9B (201 aa).

Residues Val-18, Gly-19, Lys-20, Ser-21, Ser-22, Asp-33, Ser-34, Ala-36, His-38, and Thr-39 each contribute to the GTP site. Ser-21 provides a ligand contact to Mg(2+). Residues 31–42 (KFDSQAFHTIGV) carry the Switch 1 motif. Ser-34 carries the post-translational modification Phosphoserine. Mg(2+) contacts are provided by Thr-39 and Asp-62. A Switch 2 motif is present at residues 64-78 (AGQERFKSLRTPFYR). GTP is bound by residues Gly-65, Asn-124, Lys-125, Ala-155, and Lys-156. 2 S-geranylgeranyl cysteine lipidation sites follow: Cys-200 and Cys-201.

It belongs to the small GTPase superfamily. Rab family. As to quaternary structure, interacts (GTP-bound form) with SGSM1; the GDP-bound form has much lower affinity for SGSM1. The GTP-bound form but not the GDP-bound form interacts with HPS4 and the BLOC-3 complex (heterodimer of HPS1 and HPS4) but does not interact with HPS1 alone. Interacts (GTP-bound form) with NDE1. Requires Mg(2+) as cofactor.

The protein resides in the cell membrane. The protein localises to the cytoplasmic vesicle. It localises to the phagosome membrane. The catalysed reaction is GTP + H2O = GDP + phosphate + H(+). Regulated by guanine nucleotide exchange factors (GEFs) which promote the exchange of bound GDP for free GTP. Regulated by GTPase activating proteins (GAPs) which increase the GTP hydrolysis activity. Inhibited by GDP dissociation inhibitors (GDIs). Its function is as follows. The small GTPases Rab are key regulators of intracellular membrane trafficking, from the formation of transport vesicles to their fusion with membranes. Rabs cycle between an inactive GDP-bound form and an active GTP-bound form that is able to recruit to membranes different sets of downstream effectors directly responsible for vesicle formation, movement, tethering and fusion. RAB9B is involved in the transport of proteins between the endosomes and the trans Golgi network. May use NDE1/NDEL1 as an effector to interact with the dynein motor complex in order to control retrograde trafficking of RAB9-associated late endosomes to the TGN. The polypeptide is Ras-related protein Rab-9B (Mus musculus (Mouse)).